The following is a 131-amino-acid chain: Phosphoribosyl-AMP cyclohydrolase (131 aa).

Position 76 (Asp-76) interacts with Mg(2+). Position 77 (Cys-77) interacts with Zn(2+). 2 residues coordinate Mg(2+): Asp-78 and Asp-80. Residues Cys-94 and Cys-101 each contribute to the Zn(2+) site.

It belongs to the PRA-CH family. As to quaternary structure, homodimer. It depends on Mg(2+) as a cofactor. The cofactor is Zn(2+).

It localises to the cytoplasm. The enzyme catalyses 1-(5-phospho-beta-D-ribosyl)-5'-AMP + H2O = 1-(5-phospho-beta-D-ribosyl)-5-[(5-phospho-beta-D-ribosylamino)methylideneamino]imidazole-4-carboxamide. It participates in amino-acid biosynthesis; L-histidine biosynthesis; L-histidine from 5-phospho-alpha-D-ribose 1-diphosphate: step 3/9. Its function is as follows. Catalyzes the hydrolysis of the adenine ring of phosphoribosyl-AMP. The polypeptide is Phosphoribosyl-AMP cyclohydrolase (Stutzerimonas stutzeri (strain A1501) (Pseudomonas stutzeri)).